The chain runs to 102 residues: Large ribosomal subunit protein bL21 (102 aa).

This sequence belongs to the bacterial ribosomal protein bL21 family. Part of the 50S ribosomal subunit. Contacts protein L20.

In terms of biological role, this protein binds to 23S rRNA in the presence of protein L20. This is Large ribosomal subunit protein bL21 from Phytoplasma australiense.